A 104-amino-acid polypeptide reads, in one-letter code: MQSQNIRIRLKAFDYRVLDASTQEIVNTAKRTGAQVRGPIPLPNKIEKFTVLRGPHVDKKSRDQFEIRTHKRLLDIVDPTPQTVDALMKLDLAAGVDVEIKLQS.

This sequence belongs to the universal ribosomal protein uS10 family. Part of the 30S ribosomal subunit.

Its function is as follows. Involved in the binding of tRNA to the ribosomes. The protein is Small ribosomal subunit protein uS10 of Ruegeria pomeroyi (strain ATCC 700808 / DSM 15171 / DSS-3) (Silicibacter pomeroyi).